The following is an 859-amino-acid chain: DNA mismatch repair protein MutS (859 aa).

618–625 (GPNMGGKS) lines the ATP pocket. Residues 803–829 (RDHDVQQNTEQQGTQQNMSFVPSAPSP) are disordered. Residues 808-819 (QQNTEQQGTQQN) show a composition bias toward low complexity.

Belongs to the DNA mismatch repair MutS family.

This protein is involved in the repair of mismatches in DNA. It is possible that it carries out the mismatch recognition step. This protein has a weak ATPase activity. The protein is DNA mismatch repair protein MutS of Shewanella pealeana (strain ATCC 700345 / ANG-SQ1).